A 409-amino-acid polypeptide reads, in one-letter code: Ribose-phosphate pyrophosphokinase 1 (409 aa).

Residues Asp128, His130, and Asp143 each coordinate Mg(2+). Phosphoserine is present on Ser199.

It belongs to the ribose-phosphate pyrophosphokinase family.

The protein localises to the cytoplasm. It carries out the reaction D-ribose 5-phosphate + ATP = 5-phospho-alpha-D-ribose 1-diphosphate + AMP + H(+). The protein operates within metabolic intermediate biosynthesis; 5-phospho-alpha-D-ribose 1-diphosphate biosynthesis; 5-phospho-alpha-D-ribose 1-diphosphate from D-ribose 5-phosphate (route I): step 1/1. 5-phosphoribose 1-diphosphate synthase involved in nucleotide, histidine, and tryptophan biosynthesis. Active in heteromultimeric complexes with other 5-phosphoribose 1-diphosphate synthases. This Schizosaccharomyces pombe (strain 972 / ATCC 24843) (Fission yeast) protein is Ribose-phosphate pyrophosphokinase 1.